Here is a 149-residue protein sequence, read N- to C-terminus: Pleckstrin homology domain-containing family J member 1 (149 aa).

In terms of domain architecture, PH spans 15–108 (PAEMAAELGM…WMEALRRASY (94 aa)).

In terms of tissue distribution, expressed in testis and liver.

This Homo sapiens (Human) protein is Pleckstrin homology domain-containing family J member 1 (PLEKHJ1).